Consider the following 129-residue polypeptide: uncharacterized protein (129 aa).

Residues 1 to 28 (MAGTLFIILRFVDTTLPSSRVYCVRSLE) lie on the Cytoplasmic side of the membrane. The chain crosses the membrane as a helical span at residues 29-49 (VSVAVELAAATVLAFESIGVV). The Extracellular segment spans residues 50–54 (DDCGR). The helical transmembrane segment at 55–75 (SVLFSIILIAAFICSVFLIAS) threads the bilayer. The Cytoplasmic segment spans residues 76–129 (EDIAGSRRSTGSCVTLWEGRNISFCLYRSNWLNTVPVGYMFFLRKNRSLDERYF).

It is found in the membrane. This is an uncharacterized protein from Saccharomyces cerevisiae (strain ATCC 204508 / S288c) (Baker's yeast).